We begin with the raw amino-acid sequence, 37 residues long: Omega-sparatoxin-Hv1a (37 aa).

3 cysteine pairs are disulfide-bonded: C4/C18, C11/C23, and C17/C33.

Expressed by the venom gland.

It localises to the secreted. Functionally, blocks calcium channels (Cav). The polypeptide is Omega-sparatoxin-Hv1a (Heteropoda venatoria (Brown huntsman spider)).